We begin with the raw amino-acid sequence, 96 residues long: Small ribosomal subunit protein bS6 (96 aa).

Belongs to the bacterial ribosomal protein bS6 family.

Its function is as follows. Binds together with bS18 to 16S ribosomal RNA. This Gloeobacter violaceus (strain ATCC 29082 / PCC 7421) protein is Small ribosomal subunit protein bS6.